Reading from the N-terminus, the 100-residue chain is Protein translation factor SUI1 homolog (100 aa).

This sequence belongs to the SUI1 family.

In Sulfurisphaera tokodaii (strain DSM 16993 / JCM 10545 / NBRC 100140 / 7) (Sulfolobus tokodaii), this protein is Protein translation factor SUI1 homolog.